A 362-amino-acid polypeptide reads, in one-letter code: 2-aminoethylphosphonate--pyruvate transaminase (362 aa).

K193 bears the N6-(pyridoxal phosphate)lysine mark.

The protein belongs to the class-V pyridoxal-phosphate-dependent aminotransferase family. PhnW subfamily. In terms of assembly, homodimer. Pyridoxal 5'-phosphate is required as a cofactor.

The enzyme catalyses (2-aminoethyl)phosphonate + pyruvate = phosphonoacetaldehyde + L-alanine. Its function is as follows. Involved in phosphonate degradation. This chain is 2-aminoethylphosphonate--pyruvate transaminase, found in Bacteroides fragilis (strain ATCC 25285 / DSM 2151 / CCUG 4856 / JCM 11019 / LMG 10263 / NCTC 9343 / Onslow / VPI 2553 / EN-2).